The sequence spans 207 residues: Small ribosomal subunit protein eS1 (207 aa).

The protein belongs to the eukaryotic ribosomal protein eS1 family.

The polypeptide is Small ribosomal subunit protein eS1 (Methanosarcina barkeri (strain Fusaro / DSM 804)).